A 147-amino-acid chain; its full sequence is UPF0179 protein MTH_609 (147 aa).

The protein belongs to the UPF0179 family.

The polypeptide is UPF0179 protein MTH_609 (Methanothermobacter thermautotrophicus (strain ATCC 29096 / DSM 1053 / JCM 10044 / NBRC 100330 / Delta H) (Methanobacterium thermoautotrophicum)).